Consider the following 774-residue polypeptide: Potassium/sodium hyperpolarization-activated cyclic nucleotide-gated channel 3 (774 aa).

The segment at 1–48 (MEAEQRPAAGASEGATPGLEAVPPVAPPPATAASGPIPKSGPEPKRRH) is disordered. Topologically, residues 1 to 97 (MEAEQRPAAG…PYSDFRFYWD (97 aa)) are cytoplasmic. An involved in subunit assembly region spans residues 46–91 (RRHLGTLLQPTVNKFSLRVFGSHKAVEIEQERVKSAGAWIIHPYSD). The helical transmembrane segment at 98–118 (LIMLLLMVGNLIVLPVGITFF) threads the bilayer. Over 119–124 (KEENSP) the chain is Extracellular. A helical membrane pass occupies residues 125 to 145 (PWIVFNVLSDTFFLLDLVLNF). The Cytoplasmic portion of the chain corresponds to 146–171 (RTGIVVEEGAEILLAPRAIRTRYLRT). The chain crosses the membrane as a helical span at residues 172 to 192 (WFLVDLISSIPVDYIFLVVEL). At 193–201 (EPRLDAEVY) the chain is on the extracellular side. The helical; Voltage-sensor transmembrane segment at 202 to 222 (KTARALRIVRFTKILSLLRLL) threads the bilayer. The Cytoplasmic segment spans residues 223 to 253 (RLSRLIRYIHQWEEIFHMTYDLASAVVRIFN). A helical membrane pass occupies residues 254-274 (LIGMMLLLCHWDGCLQFLVPM). The Extracellular segment spans residues 275–297 (LQDFPPDCWVSINHMVNHSWGRQ). N-linked (GlcNAc...) asparagine glycosylation occurs at Asn-291. An intramembrane region (pore-forming) is located at residues 298 to 319 (YSHALFKAMSHMLCIGYGQQAP). Residues 320-329 (VGMPDVWLTM) are Extracellular-facing. The chain crosses the membrane as a helical span at residues 330–350 (LSMIVGATCYAMFIGHATALI). At 351–774 (QSLDSSRRQY…PRGLQLSANM (424 aa)) the chain is on the cytoplasmic side. An interaction with KCTD3 region spans residues 354–774 (DSSRRQYQEK…PRGLQLSANM (421 aa)). Positions 492, 493, 495, 502, 503, 543, and 546 each coordinate 3',5'-cyclic AMP. At Ser-634 the chain carries Phosphoserine. A disordered region spans residues 682–774 (SLSRAGRSQV…PRGLQLSANM (93 aa)). The span at 751–763 (TAQPPRPPVPEPA) shows a compositional bias: pro residues.

Belongs to the potassium channel HCN family. Homotetramer. The potassium channel is composed of a homo- or heterotetrameric complex of pore-forming subunits. Interacts with HCN11. Interacts with KCTD3; this interaction increases cell surface expression and current density of this channel. Interacts with PEX5L. As to expression, detected in brain.

The protein resides in the cell membrane. It catalyses the reaction K(+)(in) = K(+)(out). The catalysed reaction is Na(+)(in) = Na(+)(out). Unlike HCN2 and HCN4, HCN3 is insensitive to cyclic nucleotides, such as cAMP or cGMP. This lack of sensitivity of HCN3, despite harboring a functional cyclic nucleotide-binding domain (CNBD), may be explained by its shorter C-terminal sequence, which may alter the normal autoinhibition of the channel. Inhibited by Cs(1+) and ZD7288. Phosphatidylinositol-4,5-bisphosphate (PIP(2)) shifts HCN3 activation to more depolarized potentials and accelerated activation kinetics. Its function is as follows. Hyperpolarization-activated ion channel that are permeable to sodium and potassium ions, with an about 3:1 preference for potassium ions. Contributes to the native pacemaker currents in heart (If) and in neurons (Ih). In particular, plays a pivotal role in maintaining excitability and promoting rhythmic burst firing within hypothalamic nuclei. Exerts a significant influence on the configuration of the cardiac action potential waveform. Does not appear to play a prominent role in the processing of acute, neuropathic, or inflammatory pain. The chain is Potassium/sodium hyperpolarization-activated cyclic nucleotide-gated channel 3 (HCN3) from Homo sapiens (Human).